A 594-amino-acid polypeptide reads, in one-letter code: UvrABC system protein C (594 aa).

One can recognise a GIY-YIG domain in the interval 14–91; sequence DQPGCYLMKD…IKKYDPKYNI (78 aa). The 36-residue stretch at 196-231 folds into the UVR domain; sequence KEVRSELEIKMYEASEKLEFERAKELRDQIAHIDAI.

The protein belongs to the UvrC family. In terms of assembly, interacts with UvrB in an incision complex.

It is found in the cytoplasm. Functionally, the UvrABC repair system catalyzes the recognition and processing of DNA lesions. UvrC both incises the 5' and 3' sides of the lesion. The N-terminal half is responsible for the 3' incision and the C-terminal half is responsible for the 5' incision. The polypeptide is UvrABC system protein C (Bacillus cereus (strain B4264)).